A 401-amino-acid chain; its full sequence is Adenosine 3'-phospho 5'-phosphosulfate transporter 2 (401 aa).

N-linked (GlcNAc...) asparagine glycosylation is found at Asn-12 and Asn-71. 6 helical membrane-spanning segments follow: residues 78–98 (LTQF…YGYL), 111–131 (YGWY…LIEL), 147–167 (MIIA…LGYL), 170–190 (PTQV…GVFI), 200–220 (VSAA…DSTI), and 223–243 (NFNL…AVIG). Asn-254 carries N-linked (GlcNAc...) asparagine glycosylation. The next 4 helical transmembrane spans lie at 267–287 (IGFV…PAVT), 298–317 (GYAF…VLAL), 324–346 (LIAV…IFFA), and 349–369 (FTFQ…LNVY).

The protein belongs to the nucleotide-sugar transporter family. SLC35B subfamily.

Its subcellular location is the golgi apparatus membrane. The enzyme catalyses 3'-phosphoadenylyl sulfate(in) + adenosine 3',5'-bisphosphate(out) = 3'-phosphoadenylyl sulfate(out) + adenosine 3',5'-bisphosphate(in). Its function is as follows. Probably functions as a 3'-phosphoadenylyl sulfate:adenosine 3',5'-bisphosphate antiporter at the Golgi membranes. Mediates the transport from the cytosol into the lumen of the Golgi of 3'-phosphoadenylyl sulfate/adenosine 3'-phospho 5'-phosphosulfate (PAPS), a universal sulfuryl donor for sulfation events that take place in that compartment. The protein is Adenosine 3'-phospho 5'-phosphosulfate transporter 2 of Pongo abelii (Sumatran orangutan).